The chain runs to 126 residues: Bleomycin resistance protein (126 aa).

One can recognise a VOC domain in the interval 1 to 119 (MTDQATPNLP…DGTLLRLIQN (119 aa)).

This sequence belongs to the bleomycin resistance protein family.

Its function is as follows. Binding protein with a strong affinity to the bleomycin family of antibiotics. Binds to CL990; an antimitotic-antibiotic compound. This Klebsiella pneumoniae protein is Bleomycin resistance protein (ble).